The primary structure comprises 79 residues: Tau-theraphotoxin-Hs1a (79 aa).

Intrachain disulfides connect Cys2–Cys16, Cys9–Cys23, Cys15–Cys31, Cys44–Cys58, Cys51–Cys63, and Cys57–Cys71. 2 Domain repeats span residues 2 to 31 (CAKE…IPHC) and 42 to 71 (TNCA…IPYC). Positions 2–71 (CAKEGEVCSW…DCPLAFIPYC (70 aa)) are 2 X approximate repeats with cysteine pattern C-C-CC-C-C.

Belongs to the neurotoxin 23 family. Double-knot toxin subfamily. As to quaternary structure, interacts with TRPV1 (2 toxins (4 moieties) bind 1 channel (homotetramer)). In terms of tissue distribution, expressed by the venom gland.

It is found in the secreted. Functionally, selectively activates the heat-activated TRPV1 channel. It binds to TRPV1 in an open state-dependent manner, trapping it there to produce irreversible currents. It binds to the outer edge of the external pore of TRPV1 in a counterclockwise configuration, using a limited protein-protein interface and inserting hydrophobic residues into the bilayer. It also partitions naturally into membranes, with the two lobes exhibiting opposing energetics for membrane partitioning (K1) and channel activation (K2). In addition, the toxin disrupts a cluster of hydrophobic residues behind the selectivity filter that are critical for channel activation. This Cyriopagopus schmidti (Chinese bird spider) protein is Tau-theraphotoxin-Hs1a.